An 84-amino-acid polypeptide reads, in one-letter code: UPF0410 protein YmgE (84 aa).

3 consecutive transmembrane segments (helical) span residues 1–21 (MGII…KLIM), 27–47 (GGFF…GWLA), and 58–78 (GFNL…LGIF).

It belongs to the UPF0410 family.

It localises to the cell inner membrane. This Escherichia coli (strain K12) protein is UPF0410 protein YmgE (ymgE).